Consider the following 373-residue polypeptide: D-alanine--D-alanine ligase (373 aa).

The ATP-grasp domain maps to 156-363 (KKLWSAAGLP…YPTLLATMVE (208 aa)). 184–239 (LQRLGLPAYVKPARGGSSIGVSRVSSFDELPAAIAAARRHDPKVIVEAAINGRELE) provides a ligand contact to ATP. Residues aspartate 318, glutamate 330, and asparagine 332 each contribute to the Mg(2+) site.

Belongs to the D-alanine--D-alanine ligase family. Mg(2+) is required as a cofactor. The cofactor is Mn(2+).

Its subcellular location is the cytoplasm. The catalysed reaction is 2 D-alanine + ATP = D-alanyl-D-alanine + ADP + phosphate + H(+). The protein operates within cell wall biogenesis; peptidoglycan biosynthesis. Functionally, cell wall formation. This Mycobacterium ulcerans (strain Agy99) protein is D-alanine--D-alanine ligase.